A 402-amino-acid polypeptide reads, in one-letter code: 4-hydroxy-3-methylbut-2-enyl diphosphate reductase (402 aa).

Cys66 is a [4Fe-4S] cluster binding site. Residue His96 participates in (2E)-4-hydroxy-3-methylbut-2-enyl diphosphate binding. Dimethylallyl diphosphate is bound at residue His96. An isopentenyl diphosphate-binding site is contributed by His96. Cys157 provides a ligand contact to [4Fe-4S] cluster. Residue His185 participates in (2E)-4-hydroxy-3-methylbut-2-enyl diphosphate binding. His185 contributes to the dimethylallyl diphosphate binding site. His185 is an isopentenyl diphosphate binding site. The active-site Proton donor is Glu187. Thr250 provides a ligand contact to (2E)-4-hydroxy-3-methylbut-2-enyl diphosphate. Cys288 serves as a coordination point for [4Fe-4S] cluster. (2E)-4-hydroxy-3-methylbut-2-enyl diphosphate-binding residues include Ser317, Ser318, Asn319, and Ser379. The dimethylallyl diphosphate site is built by Ser317, Ser318, Asn319, and Ser379. Ser317, Ser318, Asn319, and Ser379 together coordinate isopentenyl diphosphate.

The protein belongs to the IspH family. It depends on [4Fe-4S] cluster as a cofactor.

The catalysed reaction is isopentenyl diphosphate + 2 oxidized [2Fe-2S]-[ferredoxin] + H2O = (2E)-4-hydroxy-3-methylbut-2-enyl diphosphate + 2 reduced [2Fe-2S]-[ferredoxin] + 2 H(+). The enzyme catalyses dimethylallyl diphosphate + 2 oxidized [2Fe-2S]-[ferredoxin] + H2O = (2E)-4-hydroxy-3-methylbut-2-enyl diphosphate + 2 reduced [2Fe-2S]-[ferredoxin] + 2 H(+). Its pathway is isoprenoid biosynthesis; dimethylallyl diphosphate biosynthesis; dimethylallyl diphosphate from (2E)-4-hydroxy-3-methylbutenyl diphosphate: step 1/1. The protein operates within isoprenoid biosynthesis; isopentenyl diphosphate biosynthesis via DXP pathway; isopentenyl diphosphate from 1-deoxy-D-xylulose 5-phosphate: step 6/6. Catalyzes the conversion of 1-hydroxy-2-methyl-2-(E)-butenyl 4-diphosphate (HMBPP) into a mixture of isopentenyl diphosphate (IPP) and dimethylallyl diphosphate (DMAPP). Acts in the terminal step of the DOXP/MEP pathway for isoprenoid precursor biosynthesis. This chain is 4-hydroxy-3-methylbut-2-enyl diphosphate reductase, found in Nostoc sp. (strain PCC 7120 / SAG 25.82 / UTEX 2576).